A 121-amino-acid chain; its full sequence is Large ribosomal subunit protein uL24 (121 aa).

The disordered stretch occupies residues 1 to 23; sequence MVRIESSQPRKQRKARYDAPSHM.

It belongs to the universal ribosomal protein uL24 family. Part of the 50S ribosomal subunit.

One of two assembly initiator proteins, it binds directly to the 5'-end of the 23S rRNA, where it nucleates assembly of the 50S subunit. In terms of biological role, located at the polypeptide exit tunnel on the outside of the subunit. The chain is Large ribosomal subunit protein uL24 from Methanoregula boonei (strain DSM 21154 / JCM 14090 / 6A8).